The primary structure comprises 131 residues: Large ribosomal subunit protein bL17 (131 aa).

The protein belongs to the bacterial ribosomal protein bL17 family. As to quaternary structure, part of the 50S ribosomal subunit. Contacts protein L32.

This Shewanella sp. (strain ANA-3) protein is Large ribosomal subunit protein bL17.